The primary structure comprises 142 residues: Regulatory protein RecX (142 aa).

The protein belongs to the RecX family.

The protein resides in the cytoplasm. Modulates RecA activity. This is Regulatory protein RecX from Thermus thermophilus (strain ATCC BAA-163 / DSM 7039 / HB27).